A 518-amino-acid chain; its full sequence is Glutamate--cysteine ligase (518 aa).

The protein belongs to the glutamate--cysteine ligase type 1 family. Type 1 subfamily.

The catalysed reaction is L-cysteine + L-glutamate + ATP = gamma-L-glutamyl-L-cysteine + ADP + phosphate + H(+). It functions in the pathway sulfur metabolism; glutathione biosynthesis; glutathione from L-cysteine and L-glutamate: step 1/2. This chain is Glutamate--cysteine ligase, found in Shigella dysenteriae serotype 1 (strain Sd197).